The primary structure comprises 337 residues: Biotin synthase (337 aa).

The region spanning 62–289 (NAVQLSTLIS…KAMVRLSAGR (228 aa)) is the Radical SAM core domain. Residues Cys-77, Cys-81, and Cys-84 each coordinate [4Fe-4S] cluster. [2Fe-2S] cluster-binding residues include Cys-121, Cys-152, Cys-212, and Arg-284.

It belongs to the radical SAM superfamily. Biotin synthase family. Homodimer. Requires [4Fe-4S] cluster as cofactor. [2Fe-2S] cluster serves as cofactor.

The catalysed reaction is (4R,5S)-dethiobiotin + (sulfur carrier)-SH + 2 reduced [2Fe-2S]-[ferredoxin] + 2 S-adenosyl-L-methionine = (sulfur carrier)-H + biotin + 2 5'-deoxyadenosine + 2 L-methionine + 2 oxidized [2Fe-2S]-[ferredoxin]. Its pathway is cofactor biosynthesis; biotin biosynthesis; biotin from 7,8-diaminononanoate: step 2/2. In terms of biological role, catalyzes the conversion of dethiobiotin (DTB) to biotin by the insertion of a sulfur atom into dethiobiotin via a radical-based mechanism. This chain is Biotin synthase, found in Nitrosomonas europaea (strain ATCC 19718 / CIP 103999 / KCTC 2705 / NBRC 14298).